Here is a 699-residue protein sequence, read N- to C-terminus: Large T antigen (699 aa).

Position 1 is an N-acetylmethionine; by host (Met1). Residues Glu12–Gly75 form the J domain. The short motif at Leu105–Glu109 is the LXCXE motif element. 3 positions are modified to phosphoserine; by host: Ser114, Ser122, and Ser125. The disordered stretch occupies residues Asp115–Pro137. Position 126 is a phosphothreonine; by host (Thr126). The Nuclear localization signal signature appears at Pro127–Val134. Residues Pro141–Glu256 constitute a DNA-binding region (T-ag OBD). Residues Thr267–Arg359 form a T-ag D1-type zinc finger. The Zn(2+) site is built by Cys304, Cys307, His315, and His319. An SF3 helicase domain is found at Lys402–Ser562. Residue Gly428–Thr435 coordinates ATP. A disordered region spans residues Glu637–Asp678. The segment covering His643–Pro672 has biased composition (polar residues). Ser661 carries the phosphoserine; by host modification. At Lys691 the chain carries N6-acetyllysine; by host. Thr695 is modified (phosphothreonine; by host).

As to quaternary structure, forms homohexamers in the presence of ATP. Interacts with host HDAC1. Interacts (via LXCXE domain) with host RB1; the interaction induces the aberrant dissociation of RB1-E2F1 complex thereby disrupting RB1's activity. Interacts (via LXCXE domain) with host pRB-related proteins RBL1 and RBL2. Interacts (via C-terminus) with host TOP1 and POLA1 allowing DNA replication. Interacts with host TP53, inhibiting TP53 binding to DNA. Interacts with host preinitiation complex components TBP, TFIIA and TFIID to regulate transcription initiation. Mg(2+) is required as a cofactor. Phosphorylated on both serine and threonine residues. Small t antigen inhibits the dephosphorylation by the AC form of PP2A. Post-translationally, O-Glycosylated near the C-terminal region. In terms of processing, acetylated by CBP in a TP53-dependent manner.

Its subcellular location is the host nucleus. The catalysed reaction is Couples ATP hydrolysis with the unwinding of duplex DNA by translocating in the 3'-5' direction.. It carries out the reaction ATP + H2O = ADP + phosphate + H(+). In terms of biological role, isoform large T antigen is a key early protein essential for both driving viral replication and inducing cellular transformation. Plays a role in viral genome replication by driving entry of quiescent cells into the cell cycle and by autoregulating the synthesis of viral early mRNA. Displays highly oncogenic activities by corrupting the host cellular checkpoint mechanisms that guard cell division and the transcription, replication, and repair of DNA. Participates in the modulation of cellular gene expression preceeding viral DNA replication. This step involves binding to host key cell cycle regulators retinoblastoma protein RB1/pRb and TP53. Induces the disassembly of host E2F1 transcription factors from RB1, thus promoting transcriptional activation of E2F1-regulated S-phase genes. Inhibits host TP53 binding to DNA, abrogating the ability of TP53 to stimulate gene expression. Plays the role of a TFIID-associated factor (TAF) in transcription initiation for all three RNA polymerases, by stabilizing the TBP-TFIIA complex on promoters. Initiates viral DNA replication and unwinding via interactions with the viral origin of replication. Binds two adjacent sites in the SV40 origin. The replication fork movement is facilitated by Large T antigen helicase activity. Has processive 3'-5' DNA helicase activity which requires a short 3' single-stranded region and ATP. Activates the transcription of viral late mRNA, through host TBP and TFIIA stabilization. Interferes with histone deacetylation mediated by HDAC1, leading to activation of transcription. This chain is Large T antigen, found in Papio hamadryas ursinus (Chacma baboon).